Reading from the N-terminus, the 301-residue chain is Protein SCO2, mitochondrial (301 aa).

A helical membrane pass occupies residues 82-98 (ATIALLLLSGGTYAYLS). A Thioredoxin domain is found at 101 to 284 (RRLLETEKEA…IREQIQAYVP (184 aa)). 3 residues coordinate Cu cation: Cys154, Cys158, and His245.

It belongs to the SCO1/2 family.

The protein resides in the mitochondrion inner membrane. In terms of biological role, acts as a copper chaperone, transporting copper to the Cu(A) site on the cytochrome c oxidase subunit II (COX2). This is Protein SCO2, mitochondrial (SCO2) from Saccharomyces cerevisiae (strain ATCC 204508 / S288c) (Baker's yeast).